The sequence spans 227 residues: Cytochrome c oxidase subunit 2 (227 aa).

Residues 1 to 26 are Mitochondrial intermembrane-facing; the sequence is MATWSNFNLQNSASPLMEQIIFFHDH. Residues 27–51 traverse the membrane as a helical segment; the sequence is TLVILIMITILVGYLMISLFFNSYI. Topologically, residues 52 to 62 are mitochondrial matrix; it reads NRFLLEGQMIE. A helical transmembrane segment spans residues 63–81; that stretch reads LIWTILPAITLIFIALPSL. The Mitochondrial intermembrane portion of the chain corresponds to 82–227; that stretch reads RLLYLLDELN…NFINWINNYS (146 aa). Positions 161, 196, 198, 200, 204, and 207 each coordinate Cu cation. E198 provides a ligand contact to Mg(2+).

The protein belongs to the cytochrome c oxidase subunit 2 family. In terms of assembly, component of the cytochrome c oxidase (complex IV, CIV), a multisubunit enzyme composed of a catalytic core of 3 subunits and several supernumerary subunits. The complex exists as a monomer or a dimer and forms supercomplexes (SCs) in the inner mitochondrial membrane with ubiquinol-cytochrome c oxidoreductase (cytochrome b-c1 complex, complex III, CIII). It depends on Cu cation as a cofactor.

The protein localises to the mitochondrion inner membrane. The enzyme catalyses 4 Fe(II)-[cytochrome c] + O2 + 8 H(+)(in) = 4 Fe(III)-[cytochrome c] + 2 H2O + 4 H(+)(out). In terms of biological role, component of the cytochrome c oxidase, the last enzyme in the mitochondrial electron transport chain which drives oxidative phosphorylation. The respiratory chain contains 3 multisubunit complexes succinate dehydrogenase (complex II, CII), ubiquinol-cytochrome c oxidoreductase (cytochrome b-c1 complex, complex III, CIII) and cytochrome c oxidase (complex IV, CIV), that cooperate to transfer electrons derived from NADH and succinate to molecular oxygen, creating an electrochemical gradient over the inner membrane that drives transmembrane transport and the ATP synthase. Cytochrome c oxidase is the component of the respiratory chain that catalyzes the reduction of oxygen to water. Electrons originating from reduced cytochrome c in the intermembrane space (IMS) are transferred via the dinuclear copper A center (CU(A)) of subunit 2 and heme A of subunit 1 to the active site in subunit 1, a binuclear center (BNC) formed by heme A3 and copper B (CU(B)). The BNC reduces molecular oxygen to 2 water molecules using 4 electrons from cytochrome c in the IMS and 4 protons from the mitochondrial matrix. The sequence is that of Cytochrome c oxidase subunit 2 (COII) from Choristoneura fumiferana (Spruce budworm moth).